Consider the following 65-residue polypeptide: uncharacterized protein (65 aa).

The active-site Nucleophile is the Cys9. Arg15 is a catalytic residue.

Belongs to the low molecular weight phosphotyrosine protein phosphatase family.

This is an uncharacterized protein from Synechococcus sp. (strain WH8020).